The following is a 388-amino-acid chain: MSWWWAGAIGAAKKRIDEDEAPRNYESVALIVGVTGIVGNSLAEILPLSDTPCGPWKVYGVARRPRPSWNEDHPITYISCDVLDSVDVEAKLSPLTDVTHIFYATWTKRSTEKENCEANGKMLKNVLNAMIPNCPNLKHICLQTGRKHYLGAFEDWKIKRHDPPLTEDLPRLDSQNFYYTQEDILFEEVQKKESLTWSVHRPGTIFGFSPYSMMNLVGTLCVYAAICKHEGAVLRFPGCKGAWDGYSDCSDADLIAEHQIWAAVDPYAKNEAFNVSNGDVFKWKHFWKVLAEQFGVECGEYEEGKEVKLQDLMKDKGPVWDKIVRENGLSTTKLEDVGNWWFSDIVLGNECWLDTMNKSKEHGFLGFRNSKNSFISWIDKVKAFKIVP.

NADP(+)-binding positions include 35 to 37 (TGI), 63 to 64 (RR), 81 to 82 (DV), 105 to 106 (TW), and Q143. Catalysis depends on residues K147 and Y178. Residues Y178, I205, and 212 to 214 (SMM) contribute to the NADP(+) site.

This sequence belongs to the short-chain dehydrogenases/reductases (SDR) family.

It carries out the reaction (S)-8-oxocitronellyl enol + NADP(+) = (6E)-8-oxogeranial + NADPH + H(+). The catalysed reaction is (S)-8-oxocitronellyl enol + NAD(+) = (6E)-8-oxogeranial + NADH + H(+). In terms of biological role, iridoid synthase that catalyzes the first step in generation of the iridoid ring scaffold using the linear monoterpene (6E)-8-oxogeranial as substrate. Iridoids comprise a large family of distinctive bicyclic monoterpenes that possess a wide range of pharmacological activities, including anticancer, anti-inflammatory, antifungal and antibacterial activities. Catalyzes the conversion of the linear monoterpene (6E)-8-oxogeranial to (S)-8-oxocitronellyl enol, a precursor of nepetalactones, which are metabolites that are both insect-repellent and have euphoric effect in cats. The polypeptide is (S)-8-oxocitronellyl enol synthase ISY1 (Nepeta racemosa (Catmint)).